The primary structure comprises 236 residues: tRNA1(Val) (adenine(37)-N6)-methyltransferase (236 aa).

This sequence belongs to the methyltransferase superfamily. tRNA (adenine-N(6)-)-methyltransferase family.

The protein localises to the cytoplasm. It catalyses the reaction adenosine(37) in tRNA1(Val) + S-adenosyl-L-methionine = N(6)-methyladenosine(37) in tRNA1(Val) + S-adenosyl-L-homocysteine + H(+). Its function is as follows. Specifically methylates the adenine in position 37 of tRNA(1)(Val) (anticodon cmo5UAC). The polypeptide is tRNA1(Val) (adenine(37)-N6)-methyltransferase (Actinobacillus pleuropneumoniae serotype 7 (strain AP76)).